The primary structure comprises 204 residues: Probable nicotinate-nucleotide adenylyltransferase (204 aa).

The protein belongs to the NadD family.

The enzyme catalyses nicotinate beta-D-ribonucleotide + ATP + H(+) = deamido-NAD(+) + diphosphate. Its pathway is cofactor biosynthesis; NAD(+) biosynthesis; deamido-NAD(+) from nicotinate D-ribonucleotide: step 1/1. Its function is as follows. Catalyzes the reversible adenylation of nicotinate mononucleotide (NaMN) to nicotinic acid adenine dinucleotide (NaAD). The polypeptide is Probable nicotinate-nucleotide adenylyltransferase (Methylacidiphilum infernorum (isolate V4) (Methylokorus infernorum (strain V4))).